The following is a 307-amino-acid chain: Dioxygenase swnH1 (307 aa).

3 residues coordinate Fe cation: histidine 149, aspartate 151, and histidine 227.

It belongs to the PhyH family. Homodimer. Fe cation is required as a cofactor.

It functions in the pathway mycotoxin biosynthesis. In terms of biological role, dioxygenase; part of the gene cluster that mediates the biosynthesis of swainsonine (SW), a cytotoxic fungal alkaloid and a potential cancer therapy drug. Swainsonine production occurs via a multibranched pathway and is dispensable for fungal colonization of plants and infection of insect hosts. The first step of swainsonine biosynthesis is the production of the precursor pipecolic acid (PA) via conversion of L-lysine (Lys) to 1-piperideine-6-carboxylate (P6C) by the aminotransferase swnA, the latter being further reduced to PA by the reductase swnR. PA can be converted from lysine by both the SW biosynthetic cluster and the unclustered genes such as lysine cyclodeaminase. The PKS-NRPS hybrid synthetase swnK uptakes and condensates PA and malonyl-CoA with and without skipping of the ketoreductase (KR) domain in order to produce 3 intermediates, 1-oxoindolizidine, (1S)-1-hydroxyindolizin, and (1R)-1-hydroxyindolizine; with the transisomer (1S)-1-hydroxyindolizin being predominant. The terminal thioester reductase (TE) domain of swnK is involved in reduction of the thioester bond to release the intermediate aldehydes. The oxidoreductase swnN could contribute to the reduction of 1-oxoindolizidine to (1S)-1-hydroxyindolizin and (1R)-1-hydroxyindolizine, contributing to the major route of SW production. The dioxygenase swnH2 would be responsible for the oxidization of (1R)-1-hydroxyindolizine into (1R,2S)-1,2-dihydroxyindolizine and of (1S)-1-hydroxyindolizin to yield both (1R,2S)-1,2-dihydroxyindolizine and (1S,2S)-1,2-dihydroxyindolizine. The dioxygenase swnH1 then performs the conversion of the 1,2-dihydroxyindolizine epimers to SW. The sequence is that of Dioxygenase swnH1 from Metarhizium robertsii (strain ARSEF 23 / ATCC MYA-3075) (Metarhizium anisopliae (strain ARSEF 23)).